The chain runs to 511 residues: 2,3-bisphosphoglycerate-independent phosphoglycerate mutase (511 aa).

Residues Asp-18 and Ser-68 each coordinate Mn(2+). Ser-68 functions as the Phosphoserine intermediate in the catalytic mechanism. Residues His-129, 159–160 (RD), Arg-191, Lys-197, 261–264 (RSDR), and Lys-329 contribute to the substrate site. Asp-396, His-400, Asp-437, His-438, and His-459 together coordinate Mn(2+). Residues 442–464 (ERMTKQAPDGSVRPYGGHTTNPV) are disordered.

It belongs to the BPG-independent phosphoglycerate mutase family. As to quaternary structure, monomer. It depends on Mn(2+) as a cofactor.

It catalyses the reaction (2R)-2-phosphoglycerate = (2R)-3-phosphoglycerate. Its pathway is carbohydrate degradation; glycolysis; pyruvate from D-glyceraldehyde 3-phosphate: step 3/5. In terms of biological role, catalyzes the interconversion of 2-phosphoglycerate and 3-phosphoglycerate. This is 2,3-bisphosphoglycerate-independent phosphoglycerate mutase from Streptomyces coelicolor (strain ATCC BAA-471 / A3(2) / M145).